Consider the following 419-residue polypeptide: Divinyl chlorophyllide a 8-vinyl-reductase, chloroplastic (419 aa).

A chloroplast-targeting transit peptide spans 1–71; sequence MSICSTVGAG…PIVVSSTPVV (71 aa).

Its subcellular location is the plastid. The protein localises to the chloroplast. The enzyme catalyses protochlorophyllide a + NADP(+) = 3,8-divinyl protochlorophyllide a + NADPH + H(+). Its pathway is porphyrin-containing compound metabolism; chlorophyll biosynthesis. In terms of biological role, catalyzes the conversion of divinyl chlorophyllide to monovinyl chlorophyllide. Reduces the 8-vinyl group of the tetrapyrrole to an ethyl group using NADPH as the reductant. The best substrate is (3,8-divinyl)-chlorophyllide a (DV-Chlidea). Very low activity with (3,8-divinyl)-protochlorophyllide a (DV-Pchlidea) and (3,8-divinyl)-magnesium-protoporphyrin IX monomethyl ester (DV-MPE). No activity with (3,8-divinyl)-magnesium-protoporphyrin IX (DV-Mg-Proto) and (3,8-divinyl)-chlorophyll a (DV-Chla). The protein is Divinyl chlorophyllide a 8-vinyl-reductase, chloroplastic (DVR) of Cucumis sativus (Cucumber).